The following is a 623-amino-acid chain: MKKIPHELTHMAFHGLVKYSDITVEGYPKIQYHGFIGNNRTAMLVAMNGYIDWGCLPNFNSNAVFSSILDKNKGGYFAIFPSDTTDVYVDQYYKEMTNVLVTEFVKNGKIILRLTDFMPDSEYGKISFPEVHRFVESFSEPIDITIDFKPTFNYGQDKPIIEKDQHGFIFTTDKESIGISSEFPLRKNSDRIFGNVKMEPRSSSWIIALYGIHHLFRTTDYKSYLRLQETTDYWRKWASSSSYAGAYHSMVMRSALALKVLFYEPTGLMVAAPTASLPEAIGGERNWDYRFTWIRDTAYVIEALSSIGYKYEATEFLYDMMDMITRDNRIRTIYSIDDSNDLEERIIDYEGYRGSRPVRIGNKAVDQLQIDQYGSIVRAIHSMAKAGGIVNSYLWDFVEQVMAKIEYLWKYPDSSIWEFRTEPKQYVYSKVMSWAAFDSAISMAKDLGLSAPIKQWKSIQDEIKKEVLEKGFDTDTNSFVQYYGSKNIDAALLRLPILGFIPANDEKFLGTLSRIEKELMVDGYLFKRYREDDGLKGDEGSFLMLTFWYIEDLILMKRLKKAREVLESVLEKANHLGLYSEEIDEKSGDFLGNFPQALSHLGVIRVAPKLEEALLKRTSKINS.

This sequence belongs to the glycosyl hydrolase 15 family. In terms of assembly, monomer.

It catalyses the reaction alpha,alpha-trehalose + H2O = alpha-D-glucose + beta-D-glucose. It functions in the pathway glycan degradation; trehalose degradation; D-glucose from alpha,alpha-trehalose: step 1/1. Inhibited by validamycin A. Catalyzes the hydrolysis of alpha,alpha-trehalose into two molecules of D-glucose. The polypeptide is Trehalase (Thermoplasma volcanium (strain ATCC 51530 / DSM 4299 / JCM 9571 / NBRC 15438 / GSS1)).